The chain runs to 283 residues: tRNA-cytidine(32) 2-sulfurtransferase (283 aa).

A PP-loop motif motif is present at residues 37 to 42 (SGGKDS). 3 residues coordinate [4Fe-4S] cluster: cysteine 112, cysteine 115, and cysteine 203.

This sequence belongs to the TtcA family. Homodimer. The cofactor is Mg(2+). [4Fe-4S] cluster serves as cofactor.

It is found in the cytoplasm. It catalyses the reaction cytidine(32) in tRNA + S-sulfanyl-L-cysteinyl-[cysteine desulfurase] + AH2 + ATP = 2-thiocytidine(32) in tRNA + L-cysteinyl-[cysteine desulfurase] + A + AMP + diphosphate + H(+). It functions in the pathway tRNA modification. Catalyzes the ATP-dependent 2-thiolation of cytidine in position 32 of tRNA, to form 2-thiocytidine (s(2)C32). The sulfur atoms are provided by the cysteine/cysteine desulfurase (IscS) system. The sequence is that of tRNA-cytidine(32) 2-sulfurtransferase from Legionella pneumophila (strain Corby).